The sequence spans 333 residues: Ketol-acid reductoisomerase (NADP(+)) (333 aa).

Positions 1–171 (MSNDTQPTIA…GGARANIIKT (171 aa)) constitute a KARI N-terminal Rossmann domain. Residues 14–17 (YGSQ), Arg-37, Thr-42, and 72–75 (DMVQ) contribute to the NADP(+) site. The active site involves His-97. Residue Gly-123 participates in NADP(+) binding. Residues 172 to 317 (TFKEETETDL…KKLRAKMVWL (146 aa)) form the KARI C-terminal knotted domain. Mg(2+)-binding residues include Asp-180, Glu-184, Glu-216, and Glu-220. Residue Ser-241 coordinates substrate.

Belongs to the ketol-acid reductoisomerase family. Mg(2+) serves as cofactor.

It catalyses the reaction (2R)-2,3-dihydroxy-3-methylbutanoate + NADP(+) = (2S)-2-acetolactate + NADPH + H(+). It carries out the reaction (2R,3R)-2,3-dihydroxy-3-methylpentanoate + NADP(+) = (S)-2-ethyl-2-hydroxy-3-oxobutanoate + NADPH + H(+). The protein operates within amino-acid biosynthesis; L-isoleucine biosynthesis; L-isoleucine from 2-oxobutanoate: step 2/4. It participates in amino-acid biosynthesis; L-valine biosynthesis; L-valine from pyruvate: step 2/4. Involved in the biosynthesis of branched-chain amino acids (BCAA). Catalyzes an alkyl-migration followed by a ketol-acid reduction of (S)-2-acetolactate (S2AL) to yield (R)-2,3-dihydroxy-isovalerate. In the isomerase reaction, S2AL is rearranged via a Mg-dependent methyl migration to produce 3-hydroxy-3-methyl-2-ketobutyrate (HMKB). In the reductase reaction, this 2-ketoacid undergoes a metal-dependent reduction by NADPH to yield (R)-2,3-dihydroxy-isovalerate. The chain is Ketol-acid reductoisomerase (NADP(+)) from Xanthomonas campestris pv. campestris (strain 8004).